Reading from the N-terminus, the 269-residue chain is UPF0761 membrane protein HI_0276 (269 aa).

6 consecutive transmembrane segments (helical) span residues 32–52 (MLAM…FPVF), 89–109 (MSAV…NNID), 128–148 (FAIY…SIGI), 168–188 (LLSF…YTVV), 203–223 (FLAA…IVTF), and 232–252 (AMAT…VVLV).

The protein belongs to the UPF0761 family.

It localises to the cell inner membrane. In Haemophilus influenzae (strain ATCC 51907 / DSM 11121 / KW20 / Rd), this protein is UPF0761 membrane protein HI_0276.